Here is a 341-residue protein sequence, read N- to C-terminus: MALKPTMSQLLKNYDLERLAISTVASHTALQILRGAKKYGFRTIAVARGEAVAQFYRQFPFIDEVWVGDFANFRKTAEKLAANNAVFIPHGSYVEYVGWRQALEAPVPTLGCRELLRWEADQFKKMSLLEKAGIPIPRIYKTAEEVEGPVIVKLFGAKGGRGYFVARDRRELAERLKRVTEDYIIQEYLFGVPAYYHYFSSPVYSRLEIFGADIRYESNVDGRTFGWAEPTFVVVGNLPMVLRESLLPTIYTYGVQFLKAVEEAVGCKLAGPFCLESIIKDDMSIVVFEFSGRIVAGTNIYMGYGSPYSVLYFDKPMDMGERIAHEIKEAVKRGKIEHLFT.

5-amino-1-(5-phospho-beta-D-ribosyl)imidazole-4-carboxamide contacts are provided by histidine 27 and serine 92. Residues 113–328 (RELLRWEADQ…MGERIAHEIK (216 aa)) form the ATP-grasp domain. ATP-binding positions include 143-195 (AEEV…VPAY) and glutamate 217. A 5-amino-1-(5-phospho-beta-D-ribosyl)imidazole-4-carboxamide-binding site is contributed by asparagine 237. Glutamate 276 and glutamate 289 together coordinate Mg(2+).

The protein belongs to the phosphohexose mutase family. It depends on Mg(2+) as a cofactor. The cofactor is Mn(2+).

It catalyses the reaction 5-amino-1-(5-phospho-beta-D-ribosyl)imidazole-4-carboxamide + formate + ATP = 5-formamido-1-(5-phospho-D-ribosyl)imidazole-4-carboxamide + ADP + phosphate. Its pathway is purine metabolism; IMP biosynthesis via de novo pathway; 5-formamido-1-(5-phospho-D-ribosyl)imidazole-4-carboxamide from 5-amino-1-(5-phospho-D-ribosyl)imidazole-4-carboxamide (formate route): step 1/1. Catalyzes the ATP- and formate-dependent formylation of 5-aminoimidazole-4-carboxamide-1-beta-d-ribofuranosyl 5'-monophosphate (AICAR) to 5-formaminoimidazole-4-carboxamide-1-beta-d-ribofuranosyl 5'-monophosphate (FAICAR) in the absence of folates. The chain is 5-formaminoimidazole-4-carboxamide-1-(beta)-D-ribofuranosyl 5'-monophosphate synthetase from Pyrobaculum aerophilum (strain ATCC 51768 / DSM 7523 / JCM 9630 / CIP 104966 / NBRC 100827 / IM2).